We begin with the raw amino-acid sequence, 516 residues long: L-amino-acid oxidase (516 aa).

An N-terminal signal peptide occupies residues M1–C18. The cysteines at positions 28 and 189 are disulfide-linked. FAD is bound by residues M61–A62, E81–A82, R89, and G103–R106. 2 residues coordinate substrate: R106 and H239. V279 lines the FAD pocket. C349 and C430 are oxidised to a cystine. The N-linked (GlcNAc...) asparagine glycan is linked to N379. Substrate is bound at residue Y390. Residues E475 and G482–T487 each bind FAD. G482–W483 contributes to the substrate binding site.

This sequence belongs to the flavin monoamine oxidase family. FIG1 subfamily. Homodimer; non-covalently linked. FAD is required as a cofactor. As to expression, expressed by the venom gland.

Its subcellular location is the secreted. The catalysed reaction is an L-alpha-amino acid + O2 + H2O = a 2-oxocarboxylate + H2O2 + NH4(+). Functionally, catalyzes an oxidative deamination of predominantly hydrophobic and aromatic L-amino acids, thus producing hydrogen peroxide that may contribute to the diverse toxic effects of this enzyme. Exhibits diverse biological activities, such as hemolysis, edema, hemorrhage, apoptosis, antibacterial and antiparasitic activities, as well as regulation of platelet aggregation. Effects of snake L-amino oxidases on platelets are controversial, since they either induce aggregation or inhibit agonist-induced aggregation. These different effects are probably due to different experimental conditions. The sequence is that of L-amino-acid oxidase from Crotalus adamanteus (Eastern diamondback rattlesnake).